We begin with the raw amino-acid sequence, 132 residues long: Large ribosomal subunit protein bL21 (132 aa).

The disordered stretch occupies residues 111-132 (AAEKPARKPRAKKTNEVTTDGA).

It belongs to the bacterial ribosomal protein bL21 family. Part of the 50S ribosomal subunit. Contacts protein L20.

This protein binds to 23S rRNA in the presence of protein L20. The sequence is that of Large ribosomal subunit protein bL21 from Dehalococcoides mccartyi (strain CBDB1).